We begin with the raw amino-acid sequence, 344 residues long: MSKNKSSSSKTSKTSKSSKKDVFDFTALNSDQLQNVDHNDPKLLEHLKLGPLSMFEDIDNDQERYNKMKQAFFESLFKCVALEQYRDKLFKEMTTINPEDANEDAKVKNSLKLEKEEGSDEKSKKSKKSSKKDDSDDESDNSNDSEESEAEDSDQESEKKNSKSSSKKVPKKSKDNSDVEGSDSEEESPKSAKNAKASKPAAKKSSKKQDSETEEDSESEKKSSKKVAPKGKAPVKANKKKNDSEDEDSGSDNSEEESEEPPKKASSKKPPSKSSKKAQSEDEDEDSGQSESEHSEEESNSDEDSGQSEEESEEEPPKKSKGAKAKPVAKTAKKTPAKKNSKGR.

A disordered region spans residues 95–344; it reads TINPEDANED…TPAKKNSKGR (250 aa). Over residues 103-123 the composition is skewed to basic and acidic residues; that stretch reads EDAKVKNSLKLEKEEGSDEKS. Positions 135–155 are enriched in acidic residues; the sequence is SDDESDNSNDSEESEAEDSDQ. Residues 191–200 are compositionally biased toward low complexity; that stretch reads SAKNAKASKP. Residues 244 to 259 are compositionally biased toward acidic residues; sequence SEDEDSGSDNSEEESE. Positions 265 to 276 are enriched in basic residues; sequence ASSKKPPSKSSK. Residues 281-314 show a composition bias toward acidic residues; it reads EDEDEDSGQSESEHSEEESNSDEDSGQSEEESEE. A compositionally biased stretch (basic residues) spans 331-344; sequence TAKKTPAKKNSKGR.

This is an uncharacterized protein from Acanthamoeba polyphaga (Amoeba).